The chain runs to 546 residues: 6'''-hydroxyparomomycin C oxidase (546 aa).

The interval 1-30 (MERLRGPSPLENTTARHPAPLGPAHRDGLE) is disordered. His475 acts as the Proton acceptor in catalysis.

It belongs to the GMC oxidoreductase family. The cofactor is FAD.

Its pathway is antibiotic biosynthesis; lividomycin biosynthesis. Glucosaminyl-6'-oxidase involved in the biosynthetic pathway of lividomycin by mediating FAD-dependent dehydrogenation of 6'''-hydroxyparomomycin to paromomycin. In Streptomyces lividus, this protein is 6'''-hydroxyparomomycin C oxidase (livQ).